Here is a 78-residue protein sequence, read N- to C-terminus: Calcium/calmodulin-dependent protein kinase II inhibitor 1 (78 aa).

The tract at residues 41–68 is CAMK2 inhibitory domain; the sequence is NKRPPKLGQIGRSKRVVIEDDRIDDVLK.

Belongs to the CAMK2N family. In terms of assembly, interacts with CAMK2B; the presence of Ca(2+)/calmodulin increases the interaction but is not essential. Interacts with CAMK2A; this interaction requires CAMK2A activation by Ca(2+).

The protein localises to the synapse. It localises to the cell projection. It is found in the dendrite. Its subcellular location is the postsynaptic density. Its function is as follows. Potent and specific inhibitor of CaM-kinase II (CAMK2). Plays a role in the maintenance of long-term retrieval-induced memory in response to contextual fear. Modulates blood pressure and vascular reactivity via regulation of CAMK2 activity in addition to regulation of left ventricular mass. Mediates the NLRP3 inflammasome in cardiomyocytes via acting as an inhibitor of the MAPK14/p38 and MAPK8/JNK pathways, thereby regulating ventricular remodeling and cardiac rhythm post-myocardial infarction. Negatively effects insulin sensitivity and promotes lipid formation in adipose tissues independent of CAMK2 signaling. The chain is Calcium/calmodulin-dependent protein kinase II inhibitor 1 (CAMK2N1) from Bos taurus (Bovine).